The sequence spans 185 residues: Ribosome-recycling factor (185 aa).

This sequence belongs to the RRF family.

Its subcellular location is the cytoplasm. Responsible for the release of ribosomes from messenger RNA at the termination of protein biosynthesis. May increase the efficiency of translation by recycling ribosomes from one round of translation to another. The protein is Ribosome-recycling factor of Streptococcus sanguinis (strain SK36).